We begin with the raw amino-acid sequence, 87 residues long: Small ribosomal subunit protein uS15 (87 aa).

The tract at residues 1-22 (MSEINKAEIVASNARAPSDTGS) is disordered.

The protein belongs to the universal ribosomal protein uS15 family. In terms of assembly, part of the 30S ribosomal subunit. Forms a bridge to the 50S subunit in the 70S ribosome, contacting the 23S rRNA.

In terms of biological role, one of the primary rRNA binding proteins, it binds directly to 16S rRNA where it helps nucleate assembly of the platform of the 30S subunit by binding and bridging several RNA helices of the 16S rRNA. Its function is as follows. Forms an intersubunit bridge (bridge B4) with the 23S rRNA of the 50S subunit in the ribosome. The chain is Small ribosomal subunit protein uS15 from Leptothrix cholodnii (strain ATCC 51168 / LMG 8142 / SP-6) (Leptothrix discophora (strain SP-6)).